The primary structure comprises 231 residues: Large ribosomal subunit protein uL1 (231 aa).

Belongs to the universal ribosomal protein uL1 family. As to quaternary structure, part of the 50S ribosomal subunit.

Binds directly to 23S rRNA. The L1 stalk is quite mobile in the ribosome, and is involved in E site tRNA release. In terms of biological role, protein L1 is also a translational repressor protein, it controls the translation of the L11 operon by binding to its mRNA. This Neisseria meningitidis serogroup A / serotype 4A (strain DSM 15465 / Z2491) protein is Large ribosomal subunit protein uL1.